The sequence spans 278 residues: NAD-capped RNA hydrolase NudC (278 aa).

Substrate is bound at residue Arg84. The Zn(2+) site is built by Cys114 and Cys117. Glu127 serves as a coordination point for substrate. Residues Cys132 and Cys135 each contribute to the Zn(2+) site. Residue Tyr140 participates in substrate binding. The Nudix hydrolase domain occupies Pro141–Leu265. Residues Ala174, Glu190, and Glu194 each contribute to the a divalent metal cation site. The Nudix box signature appears at Gly175–Gly196. A substrate-binding site is contributed by Gln208–Ser215. Residue Glu235 participates in a divalent metal cation binding. Ala257 contributes to the substrate binding site.

The protein belongs to the Nudix hydrolase family. NudC subfamily. As to quaternary structure, homodimer. It depends on Mg(2+) as a cofactor. The cofactor is Mn(2+). Requires Zn(2+) as cofactor.

It catalyses the reaction a 5'-end NAD(+)-phospho-ribonucleoside in mRNA + H2O = a 5'-end phospho-adenosine-phospho-ribonucleoside in mRNA + beta-nicotinamide D-ribonucleotide + 2 H(+). The catalysed reaction is NAD(+) + H2O = beta-nicotinamide D-ribonucleotide + AMP + 2 H(+). It carries out the reaction NADH + H2O = reduced beta-nicotinamide D-ribonucleotide + AMP + 2 H(+). Functionally, mRNA decapping enzyme that specifically removes the nicotinamide adenine dinucleotide (NAD) cap from a subset of mRNAs by hydrolyzing the diphosphate linkage to produce nicotinamide mononucleotide (NMN) and 5' monophosphate mRNA. The NAD-cap is present at the 5'-end of some mRNAs and stabilizes RNA against 5'-processing. Has preference for mRNAs with a 5'-end purine. Catalyzes the hydrolysis of a broad range of dinucleotide pyrophosphates. The polypeptide is NAD-capped RNA hydrolase NudC (Pseudomonas aeruginosa (strain ATCC 15692 / DSM 22644 / CIP 104116 / JCM 14847 / LMG 12228 / 1C / PRS 101 / PAO1)).